Consider the following 342-residue polypeptide: uncharacterized protein (342 aa).

This is an uncharacterized protein from Magallana gigas (Pacific oyster).